The following is a 269-amino-acid chain: GTP cyclohydrolase FolE2 (269 aa).

The protein belongs to the GTP cyclohydrolase IV family.

The catalysed reaction is GTP + H2O = 7,8-dihydroneopterin 3'-triphosphate + formate + H(+). Its pathway is cofactor biosynthesis; 7,8-dihydroneopterin triphosphate biosynthesis; 7,8-dihydroneopterin triphosphate from GTP: step 1/1. In terms of biological role, converts GTP to 7,8-dihydroneopterin triphosphate. The chain is GTP cyclohydrolase FolE2 from Burkholderia thailandensis (strain ATCC 700388 / DSM 13276 / CCUG 48851 / CIP 106301 / E264).